The sequence spans 933 residues: Dual 3',5'-cyclic-AMP and -GMP phosphodiesterase 11A (933 aa).

A disordered region spans residues 42 to 121 (HTSGQGASSL…LQRRASQKEL (80 aa)). Phosphoserine occurs at positions 162, 163, and 239. 2 GAF domains span residues 217-370 (DLTS…GIAI) and 402-558 (DLEK…GLGI). Ser424 is a binding site for 3',5'-cyclic GMP. One can recognise a PDEase domain in the interval 588–912 (SKAEVDKFKA…RKWEELHQKR (325 aa)). His664 acts as the Proton donor in catalysis. Positions 668, 704, 705, and 816 each coordinate a divalent metal cation. Residues 913 to 933 (LQVSAASPDPASPMVAGEDRL) form a disordered region.

Belongs to the cyclic nucleotide phosphodiesterase family. The cofactor is a divalent metal cation. As to expression, expressed in testis and developing spermatoza.

The protein resides in the cytoplasm. Its subcellular location is the cytosol. It carries out the reaction 3',5'-cyclic GMP + H2O = GMP + H(+). The catalysed reaction is 3',5'-cyclic AMP + H2O = AMP + H(+). With respect to regulation, inhibited by 3-isobutyl-1-methylxanthine (IBMX), zaprinast and dipyridamole. cGMP acts as an allosteric activator. Functionally, plays a role in signal transduction by regulating the intracellular concentration of cyclic nucleotides cAMP and cGMP. Catalyzes the hydrolysis of both cAMP and cGMP to 5'-AMP and 5'-GMP, respectively. The protein is Dual 3',5'-cyclic-AMP and -GMP phosphodiesterase 11A (Pde11a) of Mus musculus (Mouse).